The sequence spans 306 residues: Mating type protein SmtA-1 (306 aa).

Residues 49-104 (APKKKVNGFMGFRSYYSPLFSQFPQKARSPFMTILWQHDPFHNEWDFMCSVYSSIR) constitute a DNA-binding region (alpha box).

It belongs to the MATALPHA1 family.

The protein localises to the nucleus. Its function is as follows. Mating type proteins are sequence specific DNA-binding proteins that act as master switches in fungal differentiation by controlling gene expression in a cell type-specific fashion. Transcriptional activator that induces the transcription of alpha-specific genes. The sequence is that of Mating type protein SmtA-1 (SMTA1) from Sordaria macrospora (strain ATCC MYA-333 / DSM 997 / K(L3346) / K-hell).